We begin with the raw amino-acid sequence, 71 residues long: MAFLKKSLLLVLFLGLVSLSICEEEKRENEDEEKQEDDDQSENKRGLLSGILNTAGGLLGNLIGSLSNGES.

Positions 1–22 (MAFLKKSLLLVLFLGLVSLSIC) are cleaved as a signal peptide. The propeptide occupies 23–45 (EEEKRENEDEEKQEDDDQSENKR). Positions 25–46 (EKRENEDEEKQEDDDQSENKRG) are disordered. Acidic residues predominate over residues 30 to 40 (EDEEKQEDDDQ). N68 is modified (asparagine amide). A propeptide spanning residues 70–71 (ES) is cleaved from the precursor.

Belongs to the frog skin active peptide (FSAP) family. Plasticin subfamily. Expressed by the skin glands.

It localises to the secreted. The protein resides in the target cell membrane. Its function is as follows. Neutral peptide with no antimicrobial activity. May act in synergy with cationic peptides by enhancing their activity. Has a moderate hemolytic activity. The chain is Plasticin-C1 from Agalychnis callidryas (Red-eyed tree frog).